Reading from the N-terminus, the 263-residue chain is Shikimate dehydrogenase (NADP(+)) (263 aa).

Residues 14–16 (SLS) and threonine 60 contribute to the shikimate site. Catalysis depends on lysine 64, which acts as the Proton acceptor. Shikimate contacts are provided by asparagine 85 and aspartate 100. NADP(+) is bound by residues 123-127 (GAGGA), 146-151 (NRTPQR), and leucine 205. Tyrosine 207 is a shikimate binding site. Position 228 (glycine 228) interacts with NADP(+).

It belongs to the shikimate dehydrogenase family. As to quaternary structure, homodimer.

The enzyme catalyses shikimate + NADP(+) = 3-dehydroshikimate + NADPH + H(+). It participates in metabolic intermediate biosynthesis; chorismate biosynthesis; chorismate from D-erythrose 4-phosphate and phosphoenolpyruvate: step 4/7. Its function is as follows. Involved in the biosynthesis of the chorismate, which leads to the biosynthesis of aromatic amino acids. Catalyzes the reversible NADPH linked reduction of 3-dehydroshikimate (DHSA) to yield shikimate (SA). The polypeptide is Shikimate dehydrogenase (NADP(+)) (Thermus thermophilus (strain ATCC BAA-163 / DSM 7039 / HB27)).